Consider the following 359-residue polypeptide: 3-dehydroquinate synthase (359 aa).

NAD(+) contacts are provided by residues 71–76, 105–109, 129–130, lysine 142, lysine 151, and 169–172; these read DGEAHK, GVIGD, TT, and TLHT. The Zn(2+) site is built by glutamate 184, histidine 247, and histidine 264.

It belongs to the sugar phosphate cyclases superfamily. Dehydroquinate synthase family. NAD(+) serves as cofactor. Co(2+) is required as a cofactor. The cofactor is Zn(2+).

The protein resides in the cytoplasm. It catalyses the reaction 7-phospho-2-dehydro-3-deoxy-D-arabino-heptonate = 3-dehydroquinate + phosphate. It functions in the pathway metabolic intermediate biosynthesis; chorismate biosynthesis; chorismate from D-erythrose 4-phosphate and phosphoenolpyruvate: step 2/7. In terms of biological role, catalyzes the conversion of 3-deoxy-D-arabino-heptulosonate 7-phosphate (DAHP) to dehydroquinate (DHQ). The sequence is that of 3-dehydroquinate synthase from Neisseria meningitidis serogroup A / serotype 4A (strain DSM 15465 / Z2491).